The sequence spans 1284 residues: Peroxisomal ATPase PEX1 (1284 aa).

A disordered region spans residues 339–373 (SPKQQQDKSKQGVLLPDKEKQLSKSPDHKQISSNR). Positions 343–373 (QQDKSKQGVLLPDKEKQLSKSPDHKQISSNR) are enriched in basic and acidic residues. Residues 600–607 (GGKGSGKS) and 882–889 (GPPGTGKT) contribute to the ATP site. Ser1182, Ser1210, and Ser1212 each carry phosphoserine. The tract at residues 1261 to 1284 (FQNPKKRKNQSGTVFRTGQKVTLA) is disordered. Over residues 1270–1284 (QSGTVFRTGQKVTLA) the composition is skewed to polar residues.

The protein belongs to the AAA ATPase family. As to quaternary structure, homooligomer; homooligomerizes in the cytosol, interaction with PEX6 promotes dissociation of the homooligomer. Interacts with PEX6; forming the PEX1-PEX6 AAA ATPase complex, which is composed of a heterohexamer formed by a trimer of PEX1-PEX6 dimers. Interacts indirectly with PEX26, via its interaction with PEX6.

The protein resides in the cytoplasm. The protein localises to the cytosol. Its subcellular location is the peroxisome membrane. The catalysed reaction is ATP + H2O = ADP + phosphate + H(+). In terms of biological role, component of the PEX1-PEX6 AAA ATPase complex, a protein dislocase complex that mediates the ATP-dependent extraction of the PEX5 receptor from peroxisomal membranes, an essential step for PEX5 recycling. Specifically recognizes PEX5 monoubiquitinated at 'Cys-11', and pulls it out of the peroxisome lumen through the PEX2-PEX10-PEX12 retrotranslocation channel. Extraction by the PEX1-PEX6 AAA ATPase complex is accompanied by unfolding of the TPR repeats and release of bound cargo from PEX5. The protein is Peroxisomal ATPase PEX1 of Mus musculus (Mouse).